We begin with the raw amino-acid sequence, 572 residues long: uncharacterized protein (572 aa).

Residues 543–572 (AYKKSSNTNSTTNSMNPRRSTVSSEDWVLN) form a disordered region. The span at 547-563 (SSNTNSTTNSMNPRRST) shows a compositional bias: low complexity.

This is an uncharacterized protein from Acanthamoeba polyphaga (Amoeba).